The following is a 386-amino-acid chain: Decapping nuclease RAI1 (386 aa).

Arg-34 lines the substrate pocket. Glu-159 is a binding site for a divalent metal cation. Residue Glu-205 participates in substrate binding. Positions 207, 225, and 226 each coordinate a divalent metal cation. Substrate-binding residues include Lys-227 and Gln-251.

Belongs to the DXO/Dom3Z family. In terms of assembly, interacts with RAT1; the interaction is direct, stabilizes RAT1 protein structure and stimulates its exoribonuclease activity. The interaction also stimulates RAI1 pyrophosphohydrolase activity, probably by recruiting it to mRNA substrates. The cofactor is a divalent metal cation.

It localises to the nucleus. The enzyme catalyses a 5'-end NAD(+)-phospho-ribonucleoside in mRNA + H2O = a 5'-end phospho-ribonucleoside in mRNA + NAD(+) + H(+). It catalyses the reaction a 5'-end (N(7)-methyl 5'-triphosphoguanosine)-ribonucleoside-ribonucleotide in mRNA + H2O = a (N(7)-methyl 5'-triphosphoguanosine)-nucleoside + a 5'-end phospho-ribonucleoside in mRNA + H(+). It carries out the reaction a 5'-end triphospho-ribonucleoside in mRNA + H2O = a 5'-end phospho-ribonucleoside in mRNA + diphosphate + H(+). Functionally, decapping enzyme for NAD-capped RNAs: specifically hydrolyzes the nicotinamide adenine dinucleotide (NAD) cap from a subset of RNAs by removing the entire NAD moiety from the 5'-end of an NAD-capped RNA. The NAD-cap is present at the 5'-end of some RNAs and snoRNAs. In contrast to the canonical 5'-end N7 methylguanosine (m7G) cap, the NAD cap promotes mRNA decay. Also acts as a non-canonical decapping enzyme that removes the entire cap structure of m7G capped or incompletely capped RNAs. Has decapping activity toward incomplete 5'-end m7G cap mRNAs such as unmethylated 5'-end-capped RNA (cap0), while it has no activity toward 2'-O-ribose methylated m7G cap (cap1). Also possesses RNA 5'-pyrophosphohydrolase activity by hydrolyzing the 5'-end triphosphate to release pyrophosphates. Stimulates exoribonuclease activity of Rat1, allowing it to degrade RNAs with stable secondary structure more effectively. In Cryptococcus neoformans var. neoformans serotype D (strain B-3501A) (Filobasidiella neoformans), this protein is Decapping nuclease RAI1 (RAI1).